The sequence spans 138 residues: Probable lactoylglutathione lyase (138 aa).

The 125-residue stretch at 5–129 folds into the VOC domain; it reads RILHTMLRVG…DGYMIELIQN (125 aa). H8 is a binding site for Ni(2+). R12 contacts substrate. E59 is a Ni(2+) binding site. Positions 63 and 77 each coordinate substrate. The Ni(2+) site is built by H77 and E125. The Proton donor/acceptor role is filled by E125.

It belongs to the glyoxalase I family. Ni(2+) serves as cofactor.

It carries out the reaction (R)-S-lactoylglutathione = methylglyoxal + glutathione. Its pathway is secondary metabolite metabolism; methylglyoxal degradation; (R)-lactate from methylglyoxal: step 1/2. Its function is as follows. Catalyzes the conversion of hemimercaptal, formed from methylglyoxal and glutathione, to S-lactoylglutathione. The chain is Probable lactoylglutathione lyase (gloA) from Vibrio cholerae serotype O1 (strain ATCC 39315 / El Tor Inaba N16961).